A 319-amino-acid polypeptide reads, in one-letter code: MNPNYLDFEQPIADLEAKIQELHTASMGPSINVDTEVRALENKLRLRTAQIFRNLSAWQISQLARHPRRPYTLDYISVVCDEFQELAGDRALADDKAIVGGLARIGHRPVMLIGHQKGRDNKERLMRNFGMPKPEGYRKALRLMKLAERFGLPLLTFIDTMGAWPGIDAEERNQSEAIATNLIEMAELKIPVICTVIGEGGSGGALAIGIGDRTLMLEYSTYSVITPEGCASILWKDAAKASDAAEQLNLTARRLKEFGLIDKVIREPIGGAHRNPQQMANRLKAVLLNELEALDKVPLVTLLNQRHKRLRTYGAYENH.

The CoA carboxyltransferase C-terminal domain occupies 32 to 293 (NVDTEVRALE…KAVLLNELEA (262 aa)).

It belongs to the AccA family. As to quaternary structure, acetyl-CoA carboxylase is a heterohexamer composed of biotin carboxyl carrier protein (AccB), biotin carboxylase (AccC) and two subunits each of ACCase subunit alpha (AccA) and ACCase subunit beta (AccD).

Its subcellular location is the cytoplasm. It carries out the reaction N(6)-carboxybiotinyl-L-lysyl-[protein] + acetyl-CoA = N(6)-biotinyl-L-lysyl-[protein] + malonyl-CoA. The protein operates within lipid metabolism; malonyl-CoA biosynthesis; malonyl-CoA from acetyl-CoA: step 1/1. Functionally, component of the acetyl coenzyme A carboxylase (ACC) complex. First, biotin carboxylase catalyzes the carboxylation of biotin on its carrier protein (BCCP) and then the CO(2) group is transferred by the carboxyltransferase to acetyl-CoA to form malonyl-CoA. The polypeptide is Acetyl-coenzyme A carboxylase carboxyl transferase subunit alpha (Xylella fastidiosa (strain 9a5c)).